We begin with the raw amino-acid sequence, 294 residues long: Ribosomal RNA small subunit methyltransferase A (294 aa).

N33, L35, G60, E81, D106, and N131 together coordinate S-adenosyl-L-methionine.

The protein belongs to the class I-like SAM-binding methyltransferase superfamily. rRNA adenine N(6)-methyltransferase family. RsmA subfamily.

It localises to the cytoplasm. The catalysed reaction is adenosine(1518)/adenosine(1519) in 16S rRNA + 4 S-adenosyl-L-methionine = N(6)-dimethyladenosine(1518)/N(6)-dimethyladenosine(1519) in 16S rRNA + 4 S-adenosyl-L-homocysteine + 4 H(+). Functionally, specifically dimethylates two adjacent adenosines (A1518 and A1519) in the loop of a conserved hairpin near the 3'-end of 16S rRNA in the 30S particle. May play a critical role in biogenesis of 30S subunits. The polypeptide is Ribosomal RNA small subunit methyltransferase A (Lactococcus lactis subsp. lactis (strain IL1403) (Streptococcus lactis)).